A 206-amino-acid polypeptide reads, in one-letter code: Ribosomal RNA small subunit methyltransferase G (206 aa).

S-adenosyl-L-methionine is bound by residues Gly-74, Leu-79, Val-125–Glu-126, and Arg-140.

The protein belongs to the methyltransferase superfamily. RNA methyltransferase RsmG family.

It localises to the cytoplasm. It catalyses the reaction guanosine(527) in 16S rRNA + S-adenosyl-L-methionine = N(7)-methylguanosine(527) in 16S rRNA + S-adenosyl-L-homocysteine. Functionally, specifically methylates the N7 position of guanine in position 527 of 16S rRNA. The chain is Ribosomal RNA small subunit methyltransferase G from Shewanella sp. (strain MR-7).